A 226-amino-acid polypeptide reads, in one-letter code: Prolactin (226 aa).

A signal peptide spans 1–29; that stretch reads MNSQGSDRKAVTLLLLVMSNLLFCQNAHP. Cysteines 33 and 38 form a disulfide. A phosphoserine mark is found at Ser-53 and Ser-117. Cystine bridges form between Cys-85–Cys-201 and Cys-218–Cys-226.

The protein belongs to the somatotropin/prolactin family. As to quaternary structure, interacts with PRLR.

The protein resides in the secreted. In terms of biological role, prolactin acts primarily on the mammary gland by promoting lactation. The polypeptide is Prolactin (PRL) (Mesocricetus auratus (Golden hamster)).